We begin with the raw amino-acid sequence, 634 residues long: MAQRVAVNDGAAGSKRTSRVRVAVRLRPYMDKQDEKSEGSCVRGLGPQKLEIINWRNATETLQYQFDVFHGEETTQQEVFLTSVKPILPHILNGQNASVFAYGPTGAGKTHTMLGSQEQPGVIPRAVKEVFNLVGAQKKEQDGWEYSIGMSYLEIYNEKVLDLLSPGSQDLPIREDKDRNILIPGLTHTPLSSFADFDTHFIPASLNRTTASTKLNQRSSRSHAILLIKVVKSQRGPPHRQQTGKLYLVDLAGSEDNRRTGNQGIRLKESGAINLSLFTLSKVVDALNTGAGGRVPYRDSKLTRLLQDSLGGSAHSVMITNIAPEYKYYFDTFSALNFAAKSKQIVNRPFVRETVLAPTIAPGKRTREEQEAGGSGEPQNKRSKEGKKAEHSPSPPLHPQSSPDSSVLDRLLALEKMMMGSAERERLNLLKTVAQSRKEIQMLKEKQKELEDKANMFNKQKETTEKESKDALLFKTDLPPLHRKQSTAAKPRKQQAVVTPLQVSQVQPLQQCAVVCKPSQTLVKKKRVQTEVCDGKENIGVDLPPVEDVNWESRLDPALLEQSRKKILQTLNSGSLKELKSLQQIGDKKAKLIMGWREINGDFTQVEDLKKIEGVTVKRFSSFIKANILSSMGK.

A Kinesin motor domain is found at 19–345 (RVRVAVRLRP…LNFAAKSKQI (327 aa)). 103–110 (GPTGAGKT) provides a ligand contact to ATP. The interval 357–406 (APTIAPGKRTREEQEAGGSGEPQNKRSKEGKKAEHSPSPPLHPQSSPDSS) is disordered. The segment covering 379-391 (QNKRSKEGKKAEH) has biased composition (basic and acidic residues). Residues 421–471 (SAERERLNLLKTVAQSRKEIQMLKEKQKELEDKANMFNKQKETTEKESKDA) are a coiled coil.

Belongs to the TRAFAC class myosin-kinesin ATPase superfamily. Kinesin family. In terms of processing, ubiquitinated, leading to its subsequent proteasomal degradation.

The protein resides in the nucleus. It is found in the cytoplasm. Its subcellular location is the cytoskeleton. In terms of biological role, kinesin family member that is involved in spindle formation and the movements of chromosomes during mitosis and meiosis. Binds to microtubules and to DNA. The chain is Kinesin-like protein KIF22 (kif22) from Danio rerio (Zebrafish).